Reading from the N-terminus, the 306-residue chain is MQDKEKKIKVIVLGGPTGSGKSDLAVKLAEEIGGEIVNADSMQVYRRLDIGTAKPSAADLARVPHHLIDILDPNEDFTASDFRREATAAIADIERRGKRAIVVGGTGLYIRALLYGLVDSPTGDPELRRQFDDVPGEELLRRLSLVDPETAARLHPNDRVRLIRALEVYTQTGRPVSAFRSEHAFSDVHYQVLKMAIRVERQELYRRIDLRVEKMLEDGLVEEVRLLLAAGYGHELKALRSIGYKEITAYLAGEMTLDEAVTLIKRDTRRYAKRQMTWFGKENDIYWLEYPGSFATILGHVIEFLA.

15–22 (GPTGSGKS) provides a ligand contact to ATP. Substrate is bound at residue 17-22 (TGSGKS). Residues 40 to 43 (DSMQ) are interaction with substrate tRNA.

This sequence belongs to the IPP transferase family. Monomer. Mg(2+) is required as a cofactor.

The enzyme catalyses adenosine(37) in tRNA + dimethylallyl diphosphate = N(6)-dimethylallyladenosine(37) in tRNA + diphosphate. In terms of biological role, catalyzes the transfer of a dimethylallyl group onto the adenine at position 37 in tRNAs that read codons beginning with uridine, leading to the formation of N6-(dimethylallyl)adenosine (i(6)A). The sequence is that of tRNA dimethylallyltransferase 1 from Citrifermentans bemidjiense (strain ATCC BAA-1014 / DSM 16622 / JCM 12645 / Bem) (Geobacter bemidjiensis).